The chain runs to 39 residues: Omega-theraphotoxin-Ba1b (39 aa).

Cystine bridges form between C4–C17, C8–C31, and C25–C36.

This sequence belongs to the neurotoxin 12 (Hwtx-2) family. 06 (TXP1) subfamily. As to expression, expressed by the venom gland.

It localises to the secreted. Inhibits voltage-gated calcium channels (Cav) in rat cerebellar granule cells. Has insecticidal activity to crickets (Acheta domesticus). Is not toxic to mice. This is Omega-theraphotoxin-Ba1b from Brachypelma albiceps (Mexican golden redrump tarantula).